Here is a 185-residue protein sequence, read N- to C-terminus: Lysozyme g (185 aa).

2 disulfide bridges follow: Cys-4–Cys-60 and Cys-18–Cys-29. Glu-73 is an active-site residue.

Belongs to the glycosyl hydrolase 23 family.

It is found in the secreted. The catalysed reaction is Hydrolysis of (1-&gt;4)-beta-linkages between N-acetylmuramic acid and N-acetyl-D-glucosamine residues in a peptidoglycan and between N-acetyl-D-glucosamine residues in chitodextrins.. The polypeptide is Lysozyme g (Cygnus atratus (Black swan)).